The chain runs to 164 residues: MTCQTYCLFVLSVIMIYFGCSGSALFLGQLQNDIDKLKADFNASNSDVADGNPVFIEKVKNWTERNEKRIILSQIVTLYLEMLKKTDMSKPHIKNLSEQLNTLRNTLSNDYKKFRDLVELSNLQLTGLKIQRKAVSELFSVLQKLVETSTSKRKRSQSPKRCRC.

An N-terminal signal peptide occupies residues 1-19 (MTCQTYCLFVLSVIMIYFG). 3 N-linked (GlcNAc...) asparagine glycosylation sites follow: Asn42, Asn61, and Asn95.

Belongs to the type II (or gamma) interferon family. In terms of assembly, homodimer.

The protein resides in the secreted. In terms of biological role, produced by lymphocytes activated by specific antigens or mitogens. IFN-gamma, in addition to having antiviral activity, has important immunoregulatory functions. It is a potent activator of macrophages, it has antiproliferative effects on transformed cells and it can potentiate the antiviral and antitumor effects of the type I interferons. The sequence is that of Interferon gamma (IFNG) from Anas platyrhynchos (Mallard).